A 161-amino-acid chain; its full sequence is Suppressor of kinetochore protein 1 (161 aa).

The interval Val-102–Arg-161 is interaction with the F-box domain of F-box proteins.

The protein belongs to the SKP1 family. Essential component of the E3 ubiquitin ligase Skp1-Cullin-1-F-box (SCF) complex. Interacts with cul1, fbh1, mcs2, pip1, pof1, pof2, pof3, pof4, pof5, pof6, pof7, pof8, pof9, pof10, pof11, pof12, pof13, pof14, pop1, pop2 and tfb3. Forms a complex with pof6 and sip1. Component of the RAVE complex composed of rav1, rav2 and skp1.

The protein resides in the cytoplasm. It is found in the nucleus. Functionally, required for cig2 degradation in the G2 and M phases of the cell cycle. Together with pof6, essential for septum processing and cell separation. Involved in mitotic progression, essential for the execution of anaphase B; required for coordinated structural alterations of mitotic spindles and segregation of nuclear membrane structures at anaphase. Involved in the DNA damage checkpoint pathway and maintenance of genome integrity. Component of the RAVE complex which is required for stable assembly of the vacuolar ATPase complex V-ATPase. This Schizosaccharomyces pombe (strain 972 / ATCC 24843) (Fission yeast) protein is Suppressor of kinetochore protein 1.